The primary structure comprises 379 residues: UPF0754 membrane protein ABC1518 (379 aa).

The next 2 membrane-spanning stretches (helical) occupy residues 1–21 (MHWI…GAAT) and 358–378 (LLGG…VHFF).

Belongs to the UPF0754 family.

It localises to the cell membrane. The protein is UPF0754 membrane protein ABC1518 of Shouchella clausii (strain KSM-K16) (Alkalihalobacillus clausii).